The chain runs to 156 residues: Large ribosomal subunit protein uL15 (156 aa).

Positions 25 to 49 are disordered; it reads RGIGCGKGKTSGRGHKGQKARSGTS. A compositionally biased stretch (basic residues) spans 34–43; the sequence is TSGRGHKGQK.

The protein belongs to the universal ribosomal protein uL15 family. Part of the 50S ribosomal subunit.

In terms of biological role, binds to the 23S rRNA. The chain is Large ribosomal subunit protein uL15 from Wolbachia sp. subsp. Brugia malayi (strain TRS).